The sequence spans 378 residues: Protein RecA (378 aa).

66 to 73 (GPESSGKT) lines the ATP pocket. The tract at residues 333–378 (PDAAKAEAATDAAAAADTAGTDDAAKSVPAPASKTAKATKATAVKS) is disordered. Residues 338–378 (AEAATDAAAAADTAGTDDAAKSVPAPASKTAKATKATAVKS) show a composition bias toward low complexity.

The protein belongs to the RecA family.

It is found in the cytoplasm. In terms of biological role, can catalyze the hydrolysis of ATP in the presence of single-stranded DNA, the ATP-dependent uptake of single-stranded DNA by duplex DNA, and the ATP-dependent hybridization of homologous single-stranded DNAs. It interacts with LexA causing its activation and leading to its autocatalytic cleavage. The chain is Protein RecA from Streptomyces venezuelae (strain ATCC 10712 / CBS 650.69 / DSM 40230 / JCM 4526 / NBRC 13096 / PD 04745).